We begin with the raw amino-acid sequence, 333 residues long: Cell division protein ZipA (333 aa).

Over 1-5 (MQELR) the chain is Periplasmic. Residues 6-26 (LVLILVGALAIAALLFHGLWT) form a helical membrane-spanning segment. The Cytoplasmic segment spans residues 27–333 (SRKETSSKFG…KQRVKVFCRK (307 aa)). A compositionally biased stretch (basic and acidic residues) spans 72 to 81 (KEPAFAREEV). The disordered stretch occupies residues 72–119 (KEPAFAREEVPTSDDPLFEGTVSSESNKFTQQEKPTVQQAQPQPQPQP). Residues 92 to 107 (TVSSESNKFTQQEKPT) show a composition bias toward polar residues. The segment covering 108-119 (VQQAQPQPQPQP) has biased composition (low complexity).

The protein belongs to the ZipA family. In terms of assembly, interacts with FtsZ via their C-terminal domains.

Its subcellular location is the cell inner membrane. Essential cell division protein that stabilizes the FtsZ protofilaments by cross-linking them and that serves as a cytoplasmic membrane anchor for the Z ring. Also required for the recruitment to the septal ring of downstream cell division proteins. This Aliivibrio fischeri (strain ATCC 700601 / ES114) (Vibrio fischeri) protein is Cell division protein ZipA.